The chain runs to 201 residues: Proteasome subunit beta 1 (201 aa).

Positions 1-10 are cleaved as a propeptide — removed in mature form; by autocatalysis; sequence MNGSPSAMKG. The active-site Nucleophile is the Thr-11.

Belongs to the peptidase T1B family. In terms of assembly, the 20S proteasome core is composed of 14 alpha and 14 beta subunits that assemble into four stacked heptameric rings, resulting in a barrel-shaped structure. The two inner rings, each composed of seven catalytic beta subunits, are sandwiched by two outer rings, each composed of seven alpha subunits. The catalytic chamber with the active sites is on the inside of the barrel. Has a gated structure, the ends of the cylinder being occluded by the N-termini of the alpha-subunits. Is capped at one or both ends by the proteasome regulatory ATPase, PAN.

It localises to the cytoplasm. It carries out the reaction Cleavage of peptide bonds with very broad specificity.. With respect to regulation, the formation of the proteasomal ATPase PAN-20S proteasome complex, via the docking of the C-termini of PAN into the intersubunit pockets in the alpha-rings, triggers opening of the gate for substrate entry. Interconversion between the open-gate and close-gate conformations leads to a dynamic regulation of the 20S proteasome proteolysis activity. Component of the proteasome core, a large protease complex with broad specificity involved in protein degradation. This is Proteasome subunit beta 1 from Thermococcus gammatolerans (strain DSM 15229 / JCM 11827 / EJ3).